The chain runs to 153 residues: MSITHQPANLTLAQIQQMIGGVMLLSQHSPLHRRYVVAEWLQRILPAFELNQFCYYEDEHGRPIAFCNWAFVSEQIRDELLSGVREISPSDWRSGQQIYIPEMIAPFGHGREVVNDLRRRVFLPWQGQKVCTVRGKVDAQNDRCIRKVQWFSI.

Histidine 32 is an active-site residue.

The protein belongs to the RTX toxin acyltransferase family.

Its subcellular location is the cytoplasm. It carries out the reaction a fatty acyl-[ACP] + L-lysyl-[protein] = N(6)-(fatty acyl)-L-lysyl-[protein] + holo-[ACP] + H(+). Catalyzes fatty acylation of the protoxin (RtxA) at internal lysine residues, thereby converting it to the active toxin. This is Lysine-acyltransferase RtxC (rtxC) from Vibrio cholerae serotype O1 (strain ATCC 39315 / El Tor Inaba N16961).